A 337-amino-acid polypeptide reads, in one-letter code: ADP-ribosylation factor GTPase-activating protein AGD12 (337 aa).

Residues 15–137 (KRRIRDLLTQ…EFLKPSLRIT (123 aa)) enclose the Arf-GAP domain. Residues 30-53 (CADCGAPDPKWASANIGVFICLKC) form a C4-type zinc finger. A C2 domain is found at 164–281 (TNSSSQQPQL…AMAFGDPEMF (118 aa)). Ca(2+) contacts are provided by Asp-250, Ser-253, and Asp-256.

It depends on Ca(2+) as a cofactor. Expressed in roots, leaves, flowers and siliques. Low levels of expression in seeds and stems.

It localises to the golgi apparatus. The protein localises to the cell membrane. GTPase-activating protein (GAP) for ADP ribosylation factor (ARF). Binds phosphatidylinositol 3-monophosohate (PI-3-P) and anionic phospholipids. This is ADP-ribosylation factor GTPase-activating protein AGD12 (AGD12) from Arabidopsis thaliana (Mouse-ear cress).